A 547-amino-acid polypeptide reads, in one-letter code: Chaperonin GroEL (547 aa).

Residues 30-33 (TLGP), K51, 87-91 (DGTTT), G415, and D496 each bind ATP.

The protein belongs to the chaperonin (HSP60) family. Forms a cylinder of 14 subunits composed of two heptameric rings stacked back-to-back. Interacts with the co-chaperonin GroES.

It is found in the cytoplasm. The enzyme catalyses ATP + H2O + a folded polypeptide = ADP + phosphate + an unfolded polypeptide.. Functionally, together with its co-chaperonin GroES, plays an essential role in assisting protein folding. The GroEL-GroES system forms a nano-cage that allows encapsulation of the non-native substrate proteins and provides a physical environment optimized to promote and accelerate protein folding. This chain is Chaperonin GroEL, found in Actinobacillus succinogenes (strain ATCC 55618 / DSM 22257 / CCUG 43843 / 130Z).